A 1152-amino-acid polypeptide reads, in one-letter code: Nucleolar protein 6 (1152 aa).

Disordered stretches follow at residues Met-1–Val-30 and Glu-36–Ala-55. Ser-65 carries the post-translational modification Phosphoserine. A coiled-coil region spans residues Leu-92 to Val-128. Ser-292 and Ser-817 each carry phosphoserine.

Belongs to the NRAP family. Part of the small subunit (SSU) processome, composed of more than 70 proteins and the RNA chaperone small nucleolar RNA (snoRNA) U3. Interacts with RRP7A; required for NOL6 localization to nucleolus. In terms of tissue distribution, ubiquitously expressed.

The protein localises to the nucleus. It localises to the nucleolus. It is found in the chromosome. Its function is as follows. Part of the small subunit (SSU) processome, first precursor of the small eukaryotic ribosomal subunit. During the assembly of the SSU processome in the nucleolus, many ribosome biogenesis factors, an RNA chaperone and ribosomal proteins associate with the nascent pre-rRNA and work in concert to generate RNA folding, modifications, rearrangements and cleavage as well as targeted degradation of pre-ribosomal RNA by the RNA exosome. The sequence is that of Nucleolar protein 6 (Nol6) from Mus musculus (Mouse).